Consider the following 209-residue polypeptide: MSEDLPILSPIEARVLGCLIEKKELTPDVYPLTLNAALAAANQKTARDPVMALEQTEVHRALKLLEQKGLVRQMFGSRVERYEHQMAQRFSLTTPQTALIGLLLLRGPQTAHELLARAERMARFSSIEDLRGELDMLIGRRPPLVQEIPRGPGQREDRYVHLLAGPVDVAALSAQRSAPAMPHSDLEARLEALEQEVAALRARLDALGG.

It belongs to the UPF0502 family.

The chain is UPF0502 protein mll4256 from Mesorhizobium japonicum (strain LMG 29417 / CECT 9101 / MAFF 303099) (Mesorhizobium loti (strain MAFF 303099)).